Here is a 364-residue protein sequence, read N- to C-terminus: D-alanine--D-alanine ligase (364 aa).

An ATP-grasp domain is found at 134–347; it reads RRLACINGLK…YPDLLDELIN (214 aa). 167–222 lines the ATP pocket; sequence ASEFGWPLFVKPCSLGSSVGIHKANNMDELNAAVADALRYDEEILVEEFIVGREIE. The Mg(2+) site is built by D300, E314, and N316.

Belongs to the D-alanine--D-alanine ligase family. It depends on Mg(2+) as a cofactor. The cofactor is Mn(2+).

The protein resides in the cytoplasm. It carries out the reaction 2 D-alanine + ATP = D-alanyl-D-alanine + ADP + phosphate + H(+). It participates in cell wall biogenesis; peptidoglycan biosynthesis. Functionally, cell wall formation. This is D-alanine--D-alanine ligase from Legionella pneumophila (strain Paris).